An 83-amino-acid polypeptide reads, in one-letter code: RNA-binding protein Hfq (83 aa).

The 61-residue stretch at 10–70 folds into the Sm domain; it reads DAFLNQLRKE…ISTVSPSRPV (61 aa).

It belongs to the Hfq family. As to quaternary structure, homohexamer.

Functionally, RNA chaperone that binds small regulatory RNA (sRNAs) and mRNAs to facilitate mRNA translational regulation in response to envelope stress, environmental stress and changes in metabolite concentrations. Also binds with high specificity to tRNAs. The polypeptide is RNA-binding protein Hfq (Desulforudis audaxviator (strain MP104C)).